A 243-amino-acid polypeptide reads, in one-letter code: Terpene cyclase dpasB (243 aa).

A run of 7 helical transmembrane segments spans residues 16–36 (VVWV…SNYI), 50–70 (MALM…FIYP), 79–99 (IHTL…RYGA), 112–132 (LPVI…AFAE), 141–161 (AVSG…QLLC), 172–189 (LWLA…PNML), and 207–227 (IWFL…LWYV).

This sequence belongs to the paxB family.

It localises to the membrane. The protein operates within secondary metabolite biosynthesis; terpenoid biosynthesis. In terms of biological role, terpene cyclase; part of the gene cluster that mediates the biosynthesis of the diterpenoid pyrones subglutinols A and B. The first step of the pathway is the synthesis of the alpha-pyrone moiety by the polyketide synthase dpasA via condensation of one acetyl-CoA starter unit with 3 malonyl-CoA units and 2 methylations. The alpha-pyrone is then combined with geranylgeranyl pyrophosphate (GGPP) formed by the GGPP synthase dpasD through the action of the prenyltransferase dpasC to yield a linear alpha-pyrone diterpenoid. Subsequent steps in the diterpenoid pyrone biosynthetic pathway involve the decalin core formation, which is initiated by the epoxidation of the C10-C11 olefin by the FAD-dependent oxidoreductase dpasE, and is followed by a cyclization cascade catalyzed by the terpene cyclase dpasB. The FAD-linked oxidoreductase dpasF is then involved in tetrahydrofuran (THF) ring formation at the C5 unit to complete the formation of subglutinols A and B. DpasF possesses also an additional catalytic ability of multi-step oxidations to generate a new DDP analog with an enone system at the C5 named FDDP A. This is Terpene cyclase dpasB from Apiospora sacchari (Arthrinium sacchari).